The sequence spans 782 residues: Potassium transporter 6 (782 aa).

Residues 1-18 lie on the Cytoplasmic side of the membrane; sequence MEIESGSYQNAKKESWRT. A helical membrane pass occupies residues 19–39; that stretch reads VLTLAYQSLGVVYGDLSISPL. Over 40 to 61 the chain is Extracellular; that stretch reads YVYKSTFAEDIHHSESNEEIFG. Residues 62-82 form a helical membrane-spanning segment; sequence VLSFIFWTITLVPLLKYVFIV. Residues 83–153 are Cytoplasmic-facing; that stretch reads LRADDNGEGG…TLEKHGVLQK (71 aa). The chain crosses the membrane as a helical span at residues 154-174; that stretch reads ILLVLALIGTCMVIGDGVLTP. At 175-195 the chain is on the extracellular side; that stretch reads AISVFSAVSGVELSMSKEHHK. The chain crosses the membrane as a helical span at residues 196–216; sequence YIELPAACVILIGLFALQHYG. The Cytoplasmic segment spans residues 217–219; that stretch reads THR. The helical transmembrane segment at 220 to 240 threads the bilayer; that stretch reads VGFLFAPVILLWLMCISAIGV. Over 241 to 270 the chain is Extracellular; sequence YNIFHWNPHVYQALSPYYMYKFLKKTQSRG. A helical membrane pass occupies residues 271–291; that stretch reads WMSLGGILLCITGSEAMFADL. Residues 292–296 lie on the Cytoplasmic side of the membrane; the sequence is GHFSQ. The helical transmembrane segment at 297-317 threads the bilayer; it reads LSIKIAFTSLVYPSLILAYMG. The Extracellular portion of the chain corresponds to 318–347; that stretch reads QAAYLSQHHIIESEYNIGFYVSVPERLRWP. Residues 348–368 traverse the membrane as a helical segment; sequence VLVIAILAAVVGSQAIITGTF. At 369-395 the chain is on the cytoplasmic side; sequence SIIKQCSALGCFPKVKIVHTSSKIHGQ. The chain crosses the membrane as a helical span at residues 396 to 416; the sequence is IYIPEINWILMVLCLAVTIGF. The Extracellular portion of the chain corresponds to 417–421; that stretch reads RDTKR. A run of 2 helical transmembrane segments spans residues 422-442 and 443-463; these read LGNA…CLMS and LVIV…VVFF. The Extracellular segment spans residues 464–474; sequence GTIESLYFSAS. The chain crosses the membrane as a helical span at residues 475 to 495; the sequence is LIKFLEGAWVPIALAFCFLLA. At 496–782 the chain is on the cytoplasmic side; the sequence is MCTWHYGTLK…TLEVGMIYNV (287 aa). Residues 664–675 are compositionally biased toward basic and acidic residues; the sequence is YESDIDDPDKPG. The segment at 664–693 is disordered; sequence YESDIDDPDKPGTSEIRSPKPKKKSKSKVK. A compositionally biased stretch (basic residues) spans 682-693; that stretch reads PKPKKKSKSKVK.

It belongs to the HAK/KUP transporter (TC 2.A.72.3) family.

Its subcellular location is the cell membrane. In terms of biological role, probable potassium transporter. In Arabidopsis thaliana (Mouse-ear cress), this protein is Potassium transporter 6 (POT6).